Reading from the N-terminus, the 316-residue chain is Iron-sulfur cluster assembly SufBD family protein MJ0034 (316 aa).

It belongs to the iron-sulfur cluster assembly SufBD family.

This chain is Iron-sulfur cluster assembly SufBD family protein MJ0034, found in Methanocaldococcus jannaschii (strain ATCC 43067 / DSM 2661 / JAL-1 / JCM 10045 / NBRC 100440) (Methanococcus jannaschii).